The chain runs to 172 residues: Large ribosomal subunit protein uL10 (172 aa).

The protein belongs to the universal ribosomal protein uL10 family. Part of the ribosomal stalk of the 50S ribosomal subunit. The N-terminus interacts with L11 and the large rRNA to form the base of the stalk. The C-terminus forms an elongated spine to which L12 dimers bind in a sequential fashion forming a multimeric L10(L12)X complex.

Its function is as follows. Forms part of the ribosomal stalk, playing a central role in the interaction of the ribosome with GTP-bound translation factors. This Dinoroseobacter shibae (strain DSM 16493 / NCIMB 14021 / DFL 12) protein is Large ribosomal subunit protein uL10.